The sequence spans 911 residues: Facilitated trehalose transporter Tret1 (911 aa).

Residues 1–256 (MSGRDNRGAG…RIGFQQQKAT (256 aa)) are disordered. Over 1 to 446 (MSGRDNRGAG…VYRPTTNPIY (446 aa)) the chain is Cytoplasmic. Residues 8-19 (GAGGGGGGGGGG) show a composition bias toward gly residues. A compositionally biased stretch (basic and acidic residues) spans 32-50 (KLKEKLTRAGEELGYHRVE). 3 stretches are compositionally biased toward low complexity: residues 51–64 (SNLS…SLDT), 76–129 (AAPQ…QQLR), and 156–166 (QQIHVQQQQQQ). Phosphoserine occurs at positions 302, 303, and 304. The disordered stretch occupies residues 334-355 (VLQGSSTDSDEEGDDAEHKRLI). A phosphoserine mark is found at S374 and S376. Positions 380–402 (FLTSRQNFQQQRSISTDSRKSRR) are disordered. The span at 384 to 395 (RQNFQQQRSIST) shows a compositional bias: polar residues. Residues 447 to 467 (IWTQVLAALSVSLGSLVVGFA) traverse the membrane as a helical segment. Topologically, residues 468 to 494 (SAYTSPALVSMTNTNLTSFVVTPQAAS) are extracellular. N-linked (GlcNAc...) asparagine glycosylation is present at N482. The chain crosses the membrane as a helical span at residues 495–515 (WVGGIMPLAGLAGGIAGGPFI). The Cytoplasmic segment spans residues 516–527 (EYLGRRNTILAT). A helical transmembrane segment spans residues 528–548 (AVPFIVSWLLIACAVNVIMVL). Residues 549-551 (CGR) are Extracellular-facing. Residues 552–572 (FLAGFCVGIASLSLPVYLGET) form a helical membrane-spanning segment. The Cytoplasmic portion of the chain corresponds to 573–578 (VQPEVR). Residues 579–599 (GTLGLLPTAFGNIGILLCFVA) form a helical membrane-spanning segment. The Extracellular portion of the chain corresponds to 600 to 606 (GTYMDWS). The chain crosses the membrane as a helical span at residues 607–627 (MLAFLGASLPVPFLILMFLIP). Over 628-690 (ETPRWYVSRG…ELLKRSNLKP (63 aa)) the chain is Cytoplasmic. Residues 691 to 711 (LSISLGLMFFQQLSGINAVIF) form a helical membrane-spanning segment. The Extracellular segment spans residues 712-727 (YTVQIFQDAGSTIDGN). The helical transmembrane segment at 728–748 (VCTIIVGVVNFAATFIATILI) threads the bilayer. Residues 749 to 754 (DRAGRK) are Cytoplasmic-facing. The chain crosses the membrane as a helical span at residues 755-775 (VLLYVSNVMMVLTLFVLGGFF). The Extracellular segment spans residues 776-794 (YCKSSGMDTSNVGWLPLSC). Residues 795–815 (FVIYILGFSLGFGPIPWLMMG) traverse the membrane as a helical segment. Over 816–821 (EILPAK) the chain is Cytoplasmic. Residues 822-842 (IRGSAASVATAFNWSCTFVVT) traverse the membrane as a helical segment. At 843-855 (KSFQDMIDFMGAH) the chain is on the extracellular side. A helical transmembrane segment spans residues 856 to 876 (GAFWMFGAICFIGLFFVIFYV). Over 877–911 (PETQGKTLEDIERKMMGRVRRMSSVANIKPLSFNM) the chain is Cytoplasmic. S899 and S900 each carry phosphoserine.

It belongs to the major facilitator superfamily. Sugar transporter (TC 2.A.1.1) family. Trehalose transporter subfamily.

The protein localises to the cell membrane. Functionally, low-capacity facilitative transporter for trehalose. Does not transport maltose, sucrose or lactose. Mediates the bidirectional transfer of trehalose. Responsible for the transport of trehalose synthesized in the fat body and the incorporation of trehalose into other tissues that require a carbon source, thereby regulating trehalose levels in the hemolymph. This Drosophila virilis (Fruit fly) protein is Facilitated trehalose transporter Tret1.